The primary structure comprises 496 residues: Putative ammonium transporter 1 member 5 (496 aa).

11 consecutive transmembrane segments (helical) span residues 50–70 (LLFSAYLVFAMQLGFAMLCAG), 85–105 (VLDAAAGGLFYYLFGYAFAFG), 131–151 (FFLYQWAFAIAAAGITSGSIA), 156–176 (FVAYLIYSSFLTGFVYPVVSH), 202–222 (FAGSGVVHMVGGIAGLWGALI), 246–266 (LVVLGTFLLWFGWYGFNPGSF), 284–306 (GIGRTAVTTTLSGCTAALTTLFG), 314–334 (WNVTDVCNGLLGGFAAITAGC), 336–356 (VVDPWAAIVCGFVASLVLIGC), 369–389 (LEAAQLHGGCGAWGLIFVGLF), and 422–442 (LVQIIVIVGWVSATMGTLFFI). Ser-485 is modified (phosphoserine).

It belongs to the ammonia transporter channel (TC 1.A.11.2) family.

The protein resides in the membrane. Its function is as follows. Involved in ammonium transport. This is Putative ammonium transporter 1 member 5 (AMT1-5) from Arabidopsis thaliana (Mouse-ear cress).